Consider the following 125-residue polypeptide: Small ribosomal subunit protein uS12 (125 aa).

D89 is modified (3-methylthioaspartic acid). Residues 106–125 (GVKDRKQSRSKYGAKRPKKA) form a disordered region. Over residues 113-125 (SRSKYGAKRPKKA) the composition is skewed to basic residues.

Belongs to the universal ribosomal protein uS12 family. In terms of assembly, part of the 30S ribosomal subunit. Contacts proteins S8 and S17. May interact with IF1 in the 30S initiation complex.

Functionally, with S4 and S5 plays an important role in translational accuracy. Its function is as follows. Interacts with and stabilizes bases of the 16S rRNA that are involved in tRNA selection in the A site and with the mRNA backbone. Located at the interface of the 30S and 50S subunits, it traverses the body of the 30S subunit contacting proteins on the other side and probably holding the rRNA structure together. The combined cluster of proteins S8, S12 and S17 appears to hold together the shoulder and platform of the 30S subunit. This chain is Small ribosomal subunit protein uS12, found in Azoarcus sp. (strain BH72).